We begin with the raw amino-acid sequence, 563 residues long: Probable tRNA (uracil-O(2)-)-methyltransferase (563 aa).

The C3H1-type zinc-finger motif lies at 536-563; the sequence is TIRKAPCWMSLHHPDGCPVGQEACRYEH.

It belongs to the TRM44 family.

It localises to the cytoplasm. The catalysed reaction is uridine(44) in tRNA(Ser) + S-adenosyl-L-methionine = 2'-O-methyluridine(44) in tRNA(Ser) + S-adenosyl-L-homocysteine + H(+). In terms of biological role, probable adenosyl-L-methionine (AdoMet)-dependent tRNA (uracil-O(2)-)-methyltransferase. In Caenorhabditis elegans, this protein is Probable tRNA (uracil-O(2)-)-methyltransferase.